We begin with the raw amino-acid sequence, 286 residues long: Bifunctional protein FolD (286 aa).

Residues 166–168 (GAS) and isoleucine 232 each bind NADP(+).

The protein belongs to the tetrahydrofolate dehydrogenase/cyclohydrolase family. Homodimer.

It carries out the reaction (6R)-5,10-methylene-5,6,7,8-tetrahydrofolate + NADP(+) = (6R)-5,10-methenyltetrahydrofolate + NADPH. The catalysed reaction is (6R)-5,10-methenyltetrahydrofolate + H2O = (6R)-10-formyltetrahydrofolate + H(+). It participates in one-carbon metabolism; tetrahydrofolate interconversion. In terms of biological role, catalyzes the oxidation of 5,10-methylenetetrahydrofolate to 5,10-methenyltetrahydrofolate and then the hydrolysis of 5,10-methenyltetrahydrofolate to 10-formyltetrahydrofolate. The chain is Bifunctional protein FolD from Vibrio parahaemolyticus serotype O3:K6 (strain RIMD 2210633).